The chain runs to 312 residues: Aminoacyl tRNA synthase complex-interacting multifunctional protein 1 (312 aa).

Position 1 is an N-acetylmethionine (M1). Position 2 is an N-acetylalanine (A2). A required for fibroblast proliferation region spans residues 6–46; that stretch reads AVLKRLEQKGAEADQIIEYLKQQVSLLKEKAILQATLREEK. An interaction with HSP90B1 region spans residues 54–194; it reads KLKKEIEELK…APRTVVSGLV (141 aa). Residues 101 to 114 form a required for endothelial cell death region; that stretch reads AVTTVSSGTKEQIK. The segment at 107–147 is disordered; it reads SGTKEQIKGGTGDEKKAKEKIEKKGEKKEKKQQSIAGSADS. Basic and acidic residues predominate over residues 111-138; it reads EQIKGGTGDEKKAKEKIEKKGEKKEKKQ. The segment at 114–192 is required for endothelial cell migration; that stretch reads KGGTGDEKKA…EIAPRTVVSG (79 aa). K137 participates in a covalent cross-link: Glycyl lysine isopeptide (Lys-Gly) (interchain with G-Cter in SUMO1). Residue S140 is modified to Phosphoserine. The tRNA-binding domain occupies 151-252; sequence DVSRLDLRIG…NGSVPGDRIT (102 aa). K269 carries the N6-succinyllysine modification.

In terms of assembly, homodimer. Part of the multisynthetase complex (MSC), a multisubunit complex that groups tRNA ligases for Arg (RARS1), Asp (DARS1), Gln (QARS1), Ile (IARS1), Leu (LARS1), Lys (KARS1), Met (MARS1) the bifunctional ligase for Glu and Pro (EPRS1) and the auxiliary subunits AIMP1/p43, AIMP2/p38 and EEF1E1/p18. Interacts (via N-terminus) with RARS1 (via N-terminus). Part of a complex composed of RARS1, QARS1 and AIMP1. Interacts (via C-terminus) with SMURF2. Interacts (via N-terminus) with HSP90B1/gp96 (via C-terminus). Interacts with PSMA7. Interacts with TARS3. In terms of processing, cleaved by caspase-7 in response to apoptosis to produce EMAP-II.

It localises to the nucleus. Its subcellular location is the cytoplasm. The protein localises to the cytosol. The protein resides in the secreted. It is found in the endoplasmic reticulum. It localises to the golgi apparatus. Its function is as follows. Non-catalytic component of the multisynthase complex. Stimulates the catalytic activity of cytoplasmic arginyl-tRNA synthase. Binds tRNA. Possesses inflammatory cytokine activity. Negatively regulates TGF-beta signaling through stabilization of SMURF2 by binding to SMURF2 and inhibiting its SMAD7-mediated degradation. Involved in glucose homeostasis through induction of glucagon secretion at low glucose levels. Promotes dermal fibroblast proliferation and wound repair. Regulates KDELR1-mediated retention of HSP90B1/gp96 in the endoplasmic reticulum. Plays a role in angiogenesis by inducing endothelial cell migration at low concentrations and endothelian cell apoptosis at high concentrations. Induces maturation of dendritic cells and monocyte cell adhesion. Modulates endothelial cell responses by degrading HIF-1A through interaction with PSMA7. In Homo sapiens (Human), this protein is Aminoacyl tRNA synthase complex-interacting multifunctional protein 1 (AIMP1).